The chain runs to 317 residues: Transcriptional regulator LsrR (317 aa).

The segment at residues 33–56 (QSEISDRLGLTRLKVSRLLEKGHQ) is a DNA-binding region (H-T-H motif).

This sequence belongs to the SorC transcriptional regulatory family.

It localises to the cytoplasm. With respect to regulation, inactivated by phosphorylated autoinducer-2 (phospho-AI-2). Phospho-AI-2 acts by binding to LsrR, which is then unable to bind to the promoter regions, allowing the transcription of the target genes. In terms of biological role, transcriptional regulator that represses the expression of the lsr operon in the absence of the quorum-sensing signaling molecule autoinducer 2 (AI-2). It also represses the expression of the lsrRK operon. Acts by binding directly to the lsrA and lsrR promoter regions. In the presence of phosphorylated autoinducer-2 (phospho-AI-2), LsrR is inactivated, leading to the transcription of the genes. This chain is Transcriptional regulator LsrR (lsrR), found in Escherichia coli (strain K12 / DH10B).